The following is a 180-amino-acid chain: Crossover junction endodeoxyribonuclease RuvC (180 aa).

Catalysis depends on residues D13, E73, and D145. Residues D13, E73, and D145 each contribute to the Mg(2+) site.

Belongs to the RuvC family. In terms of assembly, homodimer which binds Holliday junction (HJ) DNA. The HJ becomes 2-fold symmetrical on binding to RuvC with unstacked arms; it has a different conformation from HJ DNA in complex with RuvA. In the full resolvosome a probable DNA-RuvA(4)-RuvB(12)-RuvC(2) complex forms which resolves the HJ. Mg(2+) is required as a cofactor.

The protein localises to the cytoplasm. It carries out the reaction Endonucleolytic cleavage at a junction such as a reciprocal single-stranded crossover between two homologous DNA duplexes (Holliday junction).. Functionally, the RuvA-RuvB-RuvC complex processes Holliday junction (HJ) DNA during genetic recombination and DNA repair. Endonuclease that resolves HJ intermediates. Cleaves cruciform DNA by making single-stranded nicks across the HJ at symmetrical positions within the homologous arms, yielding a 5'-phosphate and a 3'-hydroxyl group; requires a central core of homology in the junction. The consensus cleavage sequence is 5'-(A/T)TT(C/G)-3'. Cleavage occurs on the 3'-side of the TT dinucleotide at the point of strand exchange. HJ branch migration catalyzed by RuvA-RuvB allows RuvC to scan DNA until it finds its consensus sequence, where it cleaves and resolves the cruciform DNA. This chain is Crossover junction endodeoxyribonuclease RuvC, found in Magnetococcus marinus (strain ATCC BAA-1437 / JCM 17883 / MC-1).